Consider the following 587-residue polypeptide: Bifunctional lycopene cyclase/phytoene synthase (587 aa).

Positions 1–242 are lycopene beta-cyclase; sequence MGYDYALVHV…IVFGIAAFDK (242 aa). Transmembrane regions (helical) follow at residues 8–28, 35–55, 77–97, 120–140, 150–170, 172–192, and 220–240; these read VHVK…YPVF, RTLF…SYLI, AEEL…YIIL, GKLV…WLIA, LILV…AHFL, ALPL…LWIV, and IEEA…IAAF. Residues 249–587 are phytoene synthase; sequence AFPEKFDKPA…WVAWSTLMAA (339 aa).

This sequence in the N-terminal section; belongs to the lycopene beta-cyclase family. The protein in the C-terminal section; belongs to the phytoene/squalene synthase family.

The protein localises to the membrane. It catalyses the reaction all-trans-lycopene = gamma-carotene. The enzyme catalyses gamma-carotene = all-trans-beta-carotene. It carries out the reaction 2 (2E,6E,10E)-geranylgeranyl diphosphate = 15-cis-phytoene + 2 diphosphate. The protein operates within carotenoid biosynthesis; beta-carotene biosynthesis. It participates in carotenoid biosynthesis; phytoene biosynthesis; all-trans-phytoene from geranylgeranyl diphosphate: step 1/1. In terms of biological role, bifunctional enzyme that catalyzes the reactions from geranylgeranyl diphosphate to phytoene (phytoene synthase) and lycopene to beta-carotene via the intermediate gamma-carotene (lycopene cyclase). In Colletotrichum graminicola (strain M1.001 / M2 / FGSC 10212) (Maize anthracnose fungus), this protein is Bifunctional lycopene cyclase/phytoene synthase.